The chain runs to 230 residues: Ion-translocating oxidoreductase complex subunit E (230 aa).

The next 6 helical transmembrane spans lie at 18 to 38 (ALVQ…ATNA), 39 to 59 (LGLG…VSAL), 63 to 83 (TPAE…VSAV), 86 to 106 (LINA…PLIV), 125 to 145 (WLSA…MFVL), and 182 to 202 (PFLL…MLAV).

This sequence belongs to the NqrDE/RnfAE family. In terms of assembly, the complex is composed of six subunits: RsxA, RsxB, RsxC, RsxD, RsxE and RsxG.

The protein resides in the cell inner membrane. Its function is as follows. Part of a membrane-bound complex that couples electron transfer with translocation of ions across the membrane. Required to maintain the reduced state of SoxR. The polypeptide is Ion-translocating oxidoreductase complex subunit E (Salmonella newport (strain SL254)).